The primary structure comprises 404 residues: Probable tRNA sulfurtransferase (404 aa).

In terms of domain architecture, THUMP spans 60 to 165 (QPVVEALKLV…DEAAYISYEE (106 aa)). ATP contacts are provided by residues 183–184 (ML), 208–209 (HF), R265, G287, and Q296.

This sequence belongs to the ThiI family.

It localises to the cytoplasm. It catalyses the reaction [ThiI sulfur-carrier protein]-S-sulfanyl-L-cysteine + a uridine in tRNA + 2 reduced [2Fe-2S]-[ferredoxin] + ATP + H(+) = [ThiI sulfur-carrier protein]-L-cysteine + a 4-thiouridine in tRNA + 2 oxidized [2Fe-2S]-[ferredoxin] + AMP + diphosphate. It carries out the reaction [ThiS sulfur-carrier protein]-C-terminal Gly-Gly-AMP + S-sulfanyl-L-cysteinyl-[cysteine desulfurase] + AH2 = [ThiS sulfur-carrier protein]-C-terminal-Gly-aminoethanethioate + L-cysteinyl-[cysteine desulfurase] + A + AMP + 2 H(+). The protein operates within cofactor biosynthesis; thiamine diphosphate biosynthesis. Functionally, catalyzes the ATP-dependent transfer of a sulfur to tRNA to produce 4-thiouridine in position 8 of tRNAs, which functions as a near-UV photosensor. Also catalyzes the transfer of sulfur to the sulfur carrier protein ThiS, forming ThiS-thiocarboxylate. This is a step in the synthesis of thiazole, in the thiamine biosynthesis pathway. The sulfur is donated as persulfide by IscS. The polypeptide is Probable tRNA sulfurtransferase (Streptococcus pyogenes serotype M5 (strain Manfredo)).